Reading from the N-terminus, the 109-residue chain is Small ribosomal subunit protein uS17 (109 aa).

It belongs to the universal ribosomal protein uS17 family. As to quaternary structure, part of the 30S ribosomal subunit.

One of the primary rRNA binding proteins, it binds specifically to the 5'-end of 16S ribosomal RNA. This chain is Small ribosomal subunit protein uS17, found in Thermoplasma volcanium (strain ATCC 51530 / DSM 4299 / JCM 9571 / NBRC 15438 / GSS1).